The sequence spans 289 residues: Lipoyl synthase 1 (289 aa).

[4Fe-4S] cluster is bound by residues C33, C38, C44, C59, C63, C66, and S274. Residues 45–263 enclose the Radical SAM core domain; that stretch reads FAGGTATFLI…RIGEEELGFL (219 aa).

Belongs to the radical SAM superfamily. Lipoyl synthase family. It depends on [4Fe-4S] cluster as a cofactor.

It localises to the cytoplasm. It catalyses the reaction [[Fe-S] cluster scaffold protein carrying a second [4Fe-4S](2+) cluster] + N(6)-octanoyl-L-lysyl-[protein] + 2 oxidized [2Fe-2S]-[ferredoxin] + 2 S-adenosyl-L-methionine + 4 H(+) = [[Fe-S] cluster scaffold protein] + N(6)-[(R)-dihydrolipoyl]-L-lysyl-[protein] + 4 Fe(3+) + 2 hydrogen sulfide + 2 5'-deoxyadenosine + 2 L-methionine + 2 reduced [2Fe-2S]-[ferredoxin]. It participates in protein modification; protein lipoylation via endogenous pathway; protein N(6)-(lipoyl)lysine from octanoyl-[acyl-carrier-protein]: step 2/2. Catalyzes the radical-mediated insertion of two sulfur atoms into the C-6 and C-8 positions of the octanoyl moiety bound to the lipoyl domains of lipoate-dependent enzymes, thereby converting the octanoylated domains into lipoylated derivatives. The protein is Lipoyl synthase 1 of Parasynechococcus marenigrum (strain WH8102).